Reading from the N-terminus, the 428-residue chain is Tyrosine--tRNA ligase (428 aa).

An L-tyrosine-binding site is contributed by tyrosine 41. A 'HIGH' region motif is present at residues proline 46–histidine 55. L-tyrosine-binding residues include tyrosine 179 and glutamine 183. Residues lysine 239–threonine 243 carry the 'KMSKS' region motif. Lysine 242 provides a ligand contact to ATP. The 58-residue stretch at alanine 361 to glycine 418 folds into the S4 RNA-binding domain.

The protein belongs to the class-I aminoacyl-tRNA synthetase family. TyrS type 1 subfamily. In terms of assembly, homodimer.

The protein localises to the cytoplasm. The enzyme catalyses tRNA(Tyr) + L-tyrosine + ATP = L-tyrosyl-tRNA(Tyr) + AMP + diphosphate + H(+). Functionally, catalyzes the attachment of tyrosine to tRNA(Tyr) in a two-step reaction: tyrosine is first activated by ATP to form Tyr-AMP and then transferred to the acceptor end of tRNA(Tyr). This chain is Tyrosine--tRNA ligase, found in Salmonella paratyphi C (strain RKS4594).